Here is a 243-residue protein sequence, read N- to C-terminus: Glycerophosphodiester phosphodiesterase (243 aa).

In terms of domain architecture, GP-PDE spans 3-239; the sequence is TLVIAHRGDS…DDPETLINLV (237 aa). Residue H8 is the Proton acceptor of the active site. The Ca(2+) site is built by E35 and D37. The active-site Proton donor is H50. E110 contacts Ca(2+).

It belongs to the glycerophosphoryl diester phosphodiesterase family. In terms of assembly, homodimer. Mg(2+) serves as cofactor. The cofactor is Ca(2+).

The enzyme catalyses a sn-glycero-3-phosphodiester + H2O = an alcohol + sn-glycerol 3-phosphate + H(+). It carries out the reaction sn-glycerol 3-phosphocholine + H2O = sn-glycerol 3-phosphate + choline + H(+). With respect to regulation, inhibited by EDTA. Functionally, glycerophosphodiester phosphodiesterase hydrolyzes glycerophosphodiesters into glycerol-3-phosphate (G3P) and the corresponding alcohol. Can use glycerophosphocholine. In Caldanaerobacter subterraneus subsp. tengcongensis (strain DSM 15242 / JCM 11007 / NBRC 100824 / MB4) (Thermoanaerobacter tengcongensis), this protein is Glycerophosphodiester phosphodiesterase.